A 352-amino-acid chain; its full sequence is Endophilin-A1 (352 aa).

Residues 1–21 form a membrane-binding amphipathic helix region; that stretch reads MSVAGLKKQFHKATQKVSEKV. Residues 1–27 form a disordered region; it reads MSVAGLKKQFHKATQKVSEKVGGAEGT. The binds and tubulates liposomes stretch occupies residues 1–125; it reads MSVAGLKKQF…EVGEAMRELS (125 aa). The 232-residue stretch at 18 to 249 folds into the BAR domain; it reads SEKVGGAEGT…LEERIRQASS (232 aa). The segment at 60–87 is required for dimerization upon membrane association; sequence PNPASRAKLSMINTMSKIRGQEKGPGYP. The stretch at 181–248 forms a coiled coil; that stretch reads EELRQALEKF…RLEERIRQAS (68 aa). Positions 245–257 are enriched in basic and acidic residues; sequence RQASSQPRREYQP. Positions 245 to 289 are disordered; it reads RQASSQPRREYQPKPRMSLEFPTGDSTQPNGGLSHTGTPKPSGVQ. A Phosphoserine modification is found at Ser262. Positions 268–283 are enriched in polar residues; the sequence is GDSTQPNGGLSHTGTP. The region spanning 290 to 349 is the SH3 domain; it reads MDQPCCRALYDFEPENEGELGFKEGDIITLTNQIDENWYEGMLHGHSGFFPINYVEILVA. The residue at position 299 (Tyr299) is a Phosphotyrosine.

This sequence belongs to the endophilin family. As to quaternary structure, monomer; in cytoplasm. Homodimer; when associated with membranes. Interacts with OPHN1. Interacts with SYNJ1. Interacts with DNM1. Interacts with MAP4K3; the interaction appears to regulate MAP4K3-mediated JNK activation. Interacts with PDCD6IP. Interacts with ATXN2. Interacts with ADAM9 and ADAM15 cytoplasmic tails. Interacts with BIN2. Interacts with TMEM108. Interacts with ADGRB2. As to expression, brain, mostly in frontal cortex. Expressed at high level in fetal cerebellum.

The protein resides in the cytoplasm. It is found in the membrane. The protein localises to the early endosome. It localises to the presynapse. Its function is as follows. Implicated in synaptic vesicle endocytosis. May recruit other proteins to membranes with high curvature. Required for BDNF-dependent dendrite outgrowth. Cooperates with SH3GL2 to mediate BDNF-NTRK2 early endocytic trafficking and signaling from early endosomes. This Homo sapiens (Human) protein is Endophilin-A1 (SH3GL2).